Reading from the N-terminus, the 466-residue chain is MARTLYEKLFDAHVVYEASNETPLLYIDRHLVHEVTSPQAFDGLRAHNRQVRQPGKTFATMDHNVSTQTKDINASGEMARIQMQELIKNCNAFGVELYDLNHPFQGIVHVMGPEQGITLPGMTIVCGDSHTATHGAFGALAFGIGTSEVEHVLATQTLKQGRAKTMKIEVKGHAAPGITAKDIVLAIIGKTGSAGGTGHVVEFCGDAIRALSMEGRMTLCNMAIEMGAKAGLVAPDDITFNYVKGRLHAPKGNDFDDAVEYWKTLQTDEGATFDTVVTLQAEEIAPQVTWGTNPGQVISVNDNVPDPASFADPVERASAEKALAYMGLKPGIPLTEVAIDKVFIGSCTNSRIEDLRAAAEIAKGRKVAPGVQALVVPGSGPVKAQAEAEGLDKIFIEAGFEWRLPGCSMCLAMNNDRLNPGERCASTSNRNFEGRQGRGGRTHLVSPAMAAAAAVTGHFADIRVLK.

[4Fe-4S] cluster is bound by residues Cys347, Cys407, and Cys410.

Belongs to the aconitase/IPM isomerase family. LeuC type 1 subfamily. Heterodimer of LeuC and LeuD. It depends on [4Fe-4S] cluster as a cofactor.

It carries out the reaction (2R,3S)-3-isopropylmalate = (2S)-2-isopropylmalate. Its pathway is amino-acid biosynthesis; L-leucine biosynthesis; L-leucine from 3-methyl-2-oxobutanoate: step 2/4. Its function is as follows. Catalyzes the isomerization between 2-isopropylmalate and 3-isopropylmalate, via the formation of 2-isopropylmaleate. In Enterobacter sp. (strain 638), this protein is 3-isopropylmalate dehydratase large subunit.